A 426-amino-acid chain; its full sequence is 4-aminobutyrate aminotransferase GabT (426 aa).

Pyridoxal 5'-phosphate-binding positions include 111–112 (GS) and Gln242. The residue at position 268 (Lys268) is an N6-(pyridoxal phosphate)lysine. Thr297 provides a ligand contact to pyridoxal 5'-phosphate.

The protein belongs to the class-III pyridoxal-phosphate-dependent aminotransferase family. As to quaternary structure, homotetramer. The cofactor is pyridoxal 5'-phosphate.

It catalyses the reaction 4-aminobutanoate + 2-oxoglutarate = succinate semialdehyde + L-glutamate. The catalysed reaction is 5-aminopentanoate + 2-oxoglutarate = 5-oxopentanoate + L-glutamate. It functions in the pathway amino-acid degradation; 4-aminobutanoate degradation. Its pathway is amino-acid degradation. Its function is as follows. Pyridoxal phosphate-dependent enzyme that catalyzes transamination between primary amines and alpha-keto acids. Catalyzes the transfer of the amino group from gamma-aminobutyrate (GABA) to alpha-ketoglutarate (KG) to yield succinic semialdehyde (SSA) and glutamate. Thereby functions in a GABA degradation pathway that allows some E.coli strains to utilize GABA as a nitrogen source for growth. Also catalyzes the conversion of 5-aminovalerate to glutarate semialdehyde, as part of a L-lysine degradation pathway that proceeds via cadaverine, glutarate and L-2-hydroxyglutarate. The sequence is that of 4-aminobutyrate aminotransferase GabT (gabT) from Escherichia coli (strain K12).